Consider the following 34-residue polypeptide: Photosystem II reaction center protein M (34 aa).

Residues 5 to 25 (ILAFIATALFILIPTSFLLII) traverse the membrane as a helical segment.

This sequence belongs to the PsbM family. PSII is composed of 1 copy each of membrane proteins PsbA, PsbB, PsbC, PsbD, PsbE, PsbF, PsbH, PsbI, PsbJ, PsbK, PsbL, PsbM, PsbT, PsbX, PsbY, PsbZ, Psb30/Ycf12, at least 3 peripheral proteins of the oxygen-evolving complex and a large number of cofactors. It forms dimeric complexes. Detected in both etioplasts and green leaves; PSII is only assembled in green leaves.

It localises to the plastid. It is found in the chloroplast thylakoid membrane. In terms of biological role, one of the components of the core complex of photosystem II (PSII). PSII is a light-driven water:plastoquinone oxidoreductase that uses light energy to abstract electrons from H(2)O, generating O(2) and a proton gradient subsequently used for ATP formation. It consists of a core antenna complex that captures photons, and an electron transfer chain that converts photonic excitation into a charge separation. This subunit is found at the monomer-monomer interface. The chain is Photosystem II reaction center protein M from Hordeum vulgare (Barley).